The primary structure comprises 197 residues: Ribonuclease HII (197 aa).

One can recognise an RNase H type-2 domain in the interval K9–F197. A divalent metal cation-binding residues include D15, E16, and D107.

This sequence belongs to the RNase HII family. The cofactor is Mn(2+). Mg(2+) serves as cofactor.

It localises to the cytoplasm. The catalysed reaction is Endonucleolytic cleavage to 5'-phosphomonoester.. In terms of biological role, endonuclease that specifically degrades the RNA of RNA-DNA hybrids. The sequence is that of Ribonuclease HII from Haemophilus influenzae (strain PittEE).